The sequence spans 776 residues: Serine/threonine-protein kinase SIK1 (776 aa).

Residues 27–278 enclose the Protein kinase domain; the sequence is YDVERTLGKG…IAQIRQHRWM (252 aa). ATP contacts are provided by residues 33–41 and K56; that span reads LGKGNFAVV. D149 serves as the catalytic Proton acceptor. Residue T182 is modified to Phosphothreonine; by LKB1 and GSK3-beta. Residue S186 is modified to Phosphoserine; by autocatalysis. The 41-residue stretch at 303 to 343 folds into the UBA domain; sequence DYNEQVLGIMQALGIDRQRTVESLQNSSYNHFAAIYYLLLE. The residue at position 322 (T322) is a Phosphothreonine; by CaMK1. Disordered stretches follow at residues 350-371 and 449-472; these read STQPSSRATPAPARQPQLRNSD and EARQGPSLEEEQEVQEPLPGSTGR. S577 is modified (phosphoserine; by PKA). The segment at 586–612 is RK-rich region; sequence KAFRQQLRKNARTKGFLGLNKIKGLAR. The segment at 621–643 is disordered; that stretch reads GSRGGMSTFHTPAPSSGLQGCTA. The segment covering 628 to 643 has biased composition (polar residues); sequence TFHTPAPSSGLQGCTA.

This sequence belongs to the protein kinase superfamily. CAMK Ser/Thr protein kinase family. AMPK subfamily. In terms of assembly, interacts (when phosphorylated on Thr-182 and Ser-186) with YWHAZ. Interacts with ATP1A1. Requires Mg(2+) as cofactor. Phosphorylated at Thr-182 by STK11/LKB1 in complex with STE20-related adapter-alpha (STRADA) pseudo kinase and CAB39, leading to its activation. Phosphorylation at Thr-182 promotes autophosphorylation at Ser-186, which is required for sustained activity. Autophosphorylation at Ser-186 is maintained by sequential phosphorylation at Thr-182 by GSK3-beta. GSK3-beta cannot initiate phosphorylation at Thr-182, it can only maintain it. Phosphorylation at Ser-577 by PKA promotes translocation to the cytoplasm. Phosphorylation at Thr-322 by CaMK1 following intracellular sodium concentration leads to activation.

The protein resides in the cytoplasm. It is found in the nucleus. The catalysed reaction is L-seryl-[protein] + ATP = O-phospho-L-seryl-[protein] + ADP + H(+). It catalyses the reaction L-threonyl-[protein] + ATP = O-phospho-L-threonyl-[protein] + ADP + H(+). Its activity is regulated as follows. Activated by phosphorylation on Thr-182. Also activated by phosphorylation on Thr-322 in response to increases in intracellular sodium in parallel with elevations in intracellular calcium through the reversible sodium/calcium exchanger. Functionally, serine/threonine-protein kinase involved in various processes such as cell cycle regulation, gluconeogenesis and lipogenesis regulation, muscle growth and differentiation and tumor suppression. Phosphorylates HDAC4, HDAC5, PPME1, SREBF1, CRTC1/TORC1 and CRTC2/TORC2. Acts as a tumor suppressor and plays a key role in p53/TP53-dependent anoikis, a type of apoptosis triggered by cell detachment: required for phosphorylation of p53/TP53 in response to loss of adhesion and is able to suppress metastasis. Part of a sodium-sensing signaling network, probably by mediating phosphorylation of PPME1: following increases in intracellular sodium, SIK1 is activated by CaMK1 and phosphorylates PPME1 subunit of protein phosphatase 2A (PP2A), leading to dephosphorylation of sodium/potassium-transporting ATPase ATP1A1 and subsequent increase activity of ATP1A1. Acts as a regulator of muscle cells by phosphorylating and inhibiting class II histone deacetylases HDAC4 and HDAC5, leading to promote expression of MEF2 target genes in myocytes. Also required during cardiomyogenesis by regulating the exit of cardiomyoblasts from the cell cycle via down-regulation of CDKN1C/p57Kip2. Acts as a regulator of hepatic gluconeogenesis by phosphorylating and repressing the CREB-specific coactivators CRTC1/TORC1 and CRTC2/TORC2, leading to inhibit CREB activity. Also regulates hepatic lipogenesis by phosphorylating and inhibiting SREBF1. In concert with CRTC1/TORC1, regulates the light-induced entrainment of the circadian clock by attenuating PER1 induction; represses CREB-mediated transcription of PER1 by phosphorylating and deactivating CRTC1/TORC1. This is Serine/threonine-protein kinase SIK1 (Sik1) from Rattus norvegicus (Rat).